A 288-amino-acid polypeptide reads, in one-letter code: Probable prolyl 4-hydroxylase 6 (288 aa).

The Cytoplasmic portion of the chain corresponds to 1 to 4 (MDSQ). Residues 5–27 (YFLAFSLSLLLIFSQISSFSFSV) traverse the membrane as a helical; Signal-anchor for type II membrane protein segment. Topologically, residues 28-288 (DPTRITQLSW…GFCRKSCKAC (261 aa)) are lumenal. One can recognise a Fe2OG dioxygenase domain in the interval 116 to 238 (NGEALQILHY…KWSATRWIHV (123 aa)). Residues H134 and D136 each coordinate Fe cation. Residues N160 and N210 are each glycosylated (N-linked (GlcNAc...) asparagine). H219 lines the Fe cation pocket. K229 lines the 2-oxoglutarate pocket. The ShKT domain maps to 248 to 288 (CVDDHESCQEWADAGECEKNPMYMVGSETSLGFCRKSCKAC). Disulfide bonds link C248/C288, C255/C281, and C264/C285.

It belongs to the P4HA family. Requires Fe(2+) as cofactor. L-ascorbate is required as a cofactor.

It localises to the endoplasmic reticulum membrane. It carries out the reaction L-prolyl-[collagen] + 2-oxoglutarate + O2 = trans-4-hydroxy-L-prolyl-[collagen] + succinate + CO2. Catalyzes the post-translational formation of 4-hydroxyproline in -Xaa-Pro-Gly- sequences in proline-rich peptide sequences of plant glycoproteins and other proteins. Hydroxyprolines are important constituent of many plant cell wall glycoproteins such as extensins, hydroxyproline-rich glycoproteins, lectins and arabinogalactan proteins. In Arabidopsis thaliana (Mouse-ear cress), this protein is Probable prolyl 4-hydroxylase 6.